The chain runs to 429 residues: Trigger factor (429 aa).

One can recognise a PPIase FKBP-type domain in the interval 161 to 246 (GDRLSIDFKG…INEIASPKEL (86 aa)).

It belongs to the FKBP-type PPIase family. Tig subfamily.

Its subcellular location is the cytoplasm. It carries out the reaction [protein]-peptidylproline (omega=180) = [protein]-peptidylproline (omega=0). Involved in protein export. Acts as a chaperone by maintaining the newly synthesized protein in an open conformation. Functions as a peptidyl-prolyl cis-trans isomerase. In Vesicomyosocius okutanii subsp. Calyptogena okutanii (strain HA), this protein is Trigger factor.